The chain runs to 231 residues: Large ribosomal subunit protein uL1 (231 aa).

The protein belongs to the universal ribosomal protein uL1 family. Part of the 50S ribosomal subunit.

Binds directly to 23S rRNA. The L1 stalk is quite mobile in the ribosome, and is involved in E site tRNA release. Its function is as follows. Protein L1 is also a translational repressor protein, it controls the translation of the L11 operon by binding to its mRNA. This chain is Large ribosomal subunit protein uL1, found in Nitrosomonas eutropha (strain DSM 101675 / C91 / Nm57).